The following is a 122-amino-acid chain: Small ribosomal subunit protein bS6 (122 aa).

The protein belongs to the bacterial ribosomal protein bS6 family.

In terms of biological role, binds together with bS18 to 16S ribosomal RNA. This chain is Small ribosomal subunit protein bS6, found in Trichlorobacter lovleyi (strain ATCC BAA-1151 / DSM 17278 / SZ) (Geobacter lovleyi).